Reading from the N-terminus, the 509-residue chain is Zinc finger CCCH-type with G patch domain-containing protein (509 aa).

Residues 155–178 (PCNYYLEGECRFDEIRCRYSHGAL) form a C3H1-type zinc finger. The segment at 254-277 (EDELTSEDSSSSPHDESSDEIDSD) is disordered. In terms of domain architecture, G-patch spans 310-356 (TRGIGSKLMEKMGYIHGTGLGSEGRGIVTPVSAQILPQGRSLDACME). The disordered stretch occupies residues 407 to 430 (LGGGESRHQGDQAAKKAKTNDLQQ). Residues 411 to 420 (ESRHQGDQAA) show a composition bias toward basic and acidic residues.

Its subcellular location is the nucleus. Its function is as follows. Transcription repressor. The polypeptide is Zinc finger CCCH-type with G patch domain-containing protein (Drosophila pseudoobscura pseudoobscura (Fruit fly)).